Reading from the N-terminus, the 682-residue chain is Protein SPT2 homolog (682 aa).

The tract at residues M1–Q569 is important for interaction with DNA. K37 participates in a covalent cross-link: Glycyl lysine isopeptide (Lys-Gly) (interchain with G-Cter in SUMO2). A coiled-coil region spans residues A46–A82. Residues K80–D170 are disordered. Over residues V101 to V111 the composition is skewed to basic and acidic residues. Acidic residues predominate over residues Q121–I131. Residues K156–P165 are compositionally biased toward low complexity. K186 participates in a covalent cross-link: Glycyl lysine isopeptide (Lys-Gly) (interchain with G-Cter in SUMO2). Basic and acidic residues predominate over residues V187–E208. Disordered stretches follow at residues V187–R533 and R549–D595. Polar residues-rich tracts occupy residues S267 to K280, S317 to S334, P371 to S393, Q400 to E409, and A419 to T432. S277 carries the phosphoserine modification. Low complexity-rich tracts occupy residues P435–G460 and S490–R504. Residues G570–H682 form an important for interaction with histones region. K581 is subject to N6-acetyllysine. Positions Y586–D595 are enriched in acidic residues. At S596 the chain carries Phosphoserine. Composition is skewed to basic and acidic residues over residues S641–S652 and E663–K672. The segment at S641 to H682 is disordered. Positions W642–H682 form a coiled coil. Residues R673–H682 show a composition bias toward basic residues.

The protein belongs to the SPT2 family. As to quaternary structure, interacts with histones. Interacts with a heterotetrameric complex formed by histone H3 and H4, especially when the histone tetramer is not bound to DNA. Interacts with histone H3.3.

The protein localises to the nucleus. It localises to the nucleolus. Its function is as follows. Histone chaperone that stabilizes pre-existing histone tetramers and regulates replication-independent histone exchange on chromatin. Required for normal chromatin refolding in the coding region of transcribed genes, and for the suppression of spurious transcription. Binds DNA and histones and promotes nucleosome assembly (in vitro). Facilitates formation of tetrameric histone complexes containing histone H3 and H4. Modulates RNA polymerase 1-mediated transcription. Binds DNA, with a preference for branched DNA species, such as Y-form DNA and Holliday junction DNA. The polypeptide is Protein SPT2 homolog (Spty2d1) (Mus musculus (Mouse)).